A 349-amino-acid chain; its full sequence is Cytokine response-modifying protein B (349 aa).

The first 22 residues, 1 to 22, serve as a signal peptide directing secretion; sequence MKSVLYLYILFLSCIIINGRDA. Residues 1–160 are TNF-binding; the sequence is MKSVLYLYIL…SPCGFGTYSH (160 aa). TNFR-Cys repeat units lie at residues 31–66 and 67–108; these read KCKD…TQCT and PCGS…NRIC. Intrachain disulfides connect cysteine 32-cysteine 43, cysteine 44-cysteine 57, cysteine 47-cysteine 65, cysteine 68-cysteine 83, cysteine 86-cysteine 100, and cysteine 90-cysteine 108. 5 N-linked (GlcNAc...) asparagine; by host glycosylation sites follow: asparagine 101, asparagine 173, asparagine 189, asparagine 215, and asparagine 248. Residues 161-349 are chemokine-binding; it reads TVSSADKCEP…ITNSKPTRFL (189 aa).

It belongs to the orthopoxvirus OPG002 family. In terms of assembly, homodimer. Interacts with host TNF, LTA, CCL28, CCL25, CXCL12, CXCL13 and CXCl14.

It localises to the secreted. In terms of biological role, inhibits host immune defense by binding to host TNF and various chemokines in the extracellular space. Binds host CC chemokines (beta chemokines) and CXC chemokines (alpha chemokines). The polypeptide is Cytokine response-modifying protein B (OPG002) (Variola virus (isolate Human/India/Ind3/1967) (VARV)).